We begin with the raw amino-acid sequence, 340 residues long: Cobalt-precorrin-5B C(1)-methyltransferase (340 aa).

Belongs to the CbiD family.

It catalyses the reaction Co-precorrin-5B + S-adenosyl-L-methionine = Co-precorrin-6A + S-adenosyl-L-homocysteine. It functions in the pathway cofactor biosynthesis; adenosylcobalamin biosynthesis; cob(II)yrinate a,c-diamide from sirohydrochlorin (anaerobic route): step 6/10. In terms of biological role, catalyzes the methylation of C-1 in cobalt-precorrin-5B to form cobalt-precorrin-6A. In Pyrobaculum aerophilum (strain ATCC 51768 / DSM 7523 / JCM 9630 / CIP 104966 / NBRC 100827 / IM2), this protein is Cobalt-precorrin-5B C(1)-methyltransferase.